The primary structure comprises 145 residues: Mediator of RNA polymerase II transcription subunit 21 (145 aa).

A coiled-coil region spans residues 79 to 112 (EESTAALQAASLRQLEEENQEAAARLEEVVYRGD).

This sequence belongs to the Mediator complex subunit 21 family. In terms of assembly, component of the Mediator complex.

Its subcellular location is the nucleus. Functionally, component of the Mediator complex, a coactivator involved in the regulated transcription of nearly all RNA polymerase II-dependent genes. Mediator functions as a bridge to convey information from gene-specific regulatory proteins to the basal RNA polymerase II transcription machinery. Mediator is recruited to promoters by direct interactions with regulatory proteins and serves as a scaffold for the assembly of a functional preinitiation complex with RNA polymerase II and the general transcription factors. The polypeptide is Mediator of RNA polymerase II transcription subunit 21 (med21) (Danio rerio (Zebrafish)).